A 196-amino-acid chain; its full sequence is Imidazoleglycerol-phosphate dehydratase (196 aa).

This sequence belongs to the imidazoleglycerol-phosphate dehydratase family.

The protein localises to the cytoplasm. The catalysed reaction is D-erythro-1-(imidazol-4-yl)glycerol 3-phosphate = 3-(imidazol-4-yl)-2-oxopropyl phosphate + H2O. It functions in the pathway amino-acid biosynthesis; L-histidine biosynthesis; L-histidine from 5-phospho-alpha-D-ribose 1-diphosphate: step 6/9. The chain is Imidazoleglycerol-phosphate dehydratase from Desulforudis audaxviator (strain MP104C).